Consider the following 117-residue polypeptide: uncharacterized protein (117 aa).

This is an uncharacterized protein from Mus musculus (Mouse).